Consider the following 400-residue polypeptide: Phosphoglycerate kinase (400 aa).

Substrate is bound by residues 24–26, R40, 63–66, R121, and R154; these read DFN and HFGR. Residues K205, G296, E327, and 356-359 each bind ATP; that span reads GGDS.

In terms of assembly, monomer.

The protein localises to the cytoplasm. The catalysed reaction is (2R)-3-phosphoglycerate + ATP = (2R)-3-phospho-glyceroyl phosphate + ADP. Its pathway is carbohydrate degradation; glycolysis; pyruvate from D-glyceraldehyde 3-phosphate: step 2/5. The chain is Phosphoglycerate kinase from Nostoc sp. (strain PCC 7120 / SAG 25.82 / UTEX 2576).